An 815-amino-acid polypeptide reads, in one-letter code: MSGGAISIFGELNAHTYLGKAFFSSINYKIHQWPECRRRLGRRLMGPAQAAGPGKSSVDERNPNAAAATEINTNASIPLLQRECESFDEIQDRLTMMQDQLSRLTATLDNKQNLVDRVDQIGDKQSSMPTPPSTGHVVSDVDGQIQRYHGPWTLLAQCRQLESDLASWSKADHAAEVASLVTSMVQETMRVPSSSLSSFHTEIPGMGMCLPPRQLLSVMVECFLKNADYATSIFDHQSLYCAIDRVYRDPSNPEEKPWVLCFNLIILLTLGAEHSLQSEDPFVRPMLQAVQTAAGNSRLLMEPRLVSVQALALFSLFMQQCYPDNEPLGDGIFAQACVLARQMGLPQPHGYAATPSTLTAAEVDERHRVYQSLYIRNRYATTTSGALMWLPNSIMCTGTASAVGAHWELAKLQDEIHRVLGSCSFGSSDRRIKVAQLREKLRVWQEACLVAETQPMSMDRVILCLLFLGTRIYISMDNKETDTESFLDDCRLSCLLLIVSCTKHLRPDFSNQFHHLLRRLNPSRRNSDGSAHSSPSSTPSSSSTSSPLPSPASERPPPLDVVTRPSTGTSTPSSPTLLPLPRLANAFPITAIFILARHILGISAEGKPINTHRTVTEINSDILLLESLLFCFQNNPPFLGGKDQTLHCSYKLGQVLDHLVRIVHTMTSDRTSPRAHASGLPLVTEHAEMTDYMSRMFMTSKGSPASDLTGLWYPRDVTSDTPMELSIPDFQSVWPTPQDSLASSTNPLATAEGSIYTPALHPTPIIPNTPLDLSELFGFTNSDASEVWNLGTETTDLLENRRPSLKRQRTHFESQ.

The disordered stretch occupies residues 522–577 (PSRRNSDGSAHSSPSSTPSSSSTSSPLPSPASERPPPLDVVTRPSTGTSTPSSPTL). Positions 523–547 (SRRNSDGSAHSSPSSTPSSSSTSSP) are enriched in low complexity. The span at 548-559 (LPSPASERPPPL) shows a compositional bias: pro residues. Residues 563–577 (TRPSTGTSTPSSPTL) show a composition bias toward low complexity.

Its subcellular location is the nucleus. Its function is as follows. Putative transcription factor that may be involved in the regulation of the expression of the gene cluster that mediates the biosynthesis of phenalenones such as herqueinone, compounds that have been reported to treat tumors, bacterial infections and/or mycoses, and rheumatic diseases. In Penicillium herquei, this protein is Putative transcription factor phnE.